Reading from the N-terminus, the 417-residue chain is Serine--tRNA ligase (417 aa).

226 to 228 contacts L-serine; the sequence is TSE. ATP is bound by residues 257-259 and V273; that span reads RRE. Position 280 (E280) interacts with L-serine. An ATP-binding site is contributed by 344–347; the sequence is EVTS. T379 is an L-serine binding site.

The protein belongs to the class-II aminoacyl-tRNA synthetase family. Type-1 seryl-tRNA synthetase subfamily. In terms of assembly, homodimer. The tRNA molecule binds across the dimer.

Its subcellular location is the cytoplasm. The enzyme catalyses tRNA(Ser) + L-serine + ATP = L-seryl-tRNA(Ser) + AMP + diphosphate + H(+). It carries out the reaction tRNA(Sec) + L-serine + ATP = L-seryl-tRNA(Sec) + AMP + diphosphate + H(+). It functions in the pathway aminoacyl-tRNA biosynthesis; selenocysteinyl-tRNA(Sec) biosynthesis; L-seryl-tRNA(Sec) from L-serine and tRNA(Sec): step 1/1. In terms of biological role, catalyzes the attachment of serine to tRNA(Ser). Is also able to aminoacylate tRNA(Sec) with serine, to form the misacylated tRNA L-seryl-tRNA(Sec), which will be further converted into selenocysteinyl-tRNA(Sec). This chain is Serine--tRNA ligase, found in Tropheryma whipplei (strain TW08/27) (Whipple's bacillus).